Consider the following 101-residue polypeptide: CRISPR-associated endoribonuclease Cas2 (101 aa).

Residue aspartate 8 participates in Mg(2+) binding.

This sequence belongs to the CRISPR-associated endoribonuclease Cas2 protein family. In terms of assembly, homodimer, forms a heterotetramer with a Cas1 homodimer. It depends on Mg(2+) as a cofactor.

Its function is as follows. CRISPR (clustered regularly interspaced short palindromic repeat), is an adaptive immune system that provides protection against mobile genetic elements (viruses, transposable elements and conjugative plasmids). CRISPR clusters contain sequences complementary to antecedent mobile elements and target invading nucleic acids. CRISPR clusters are transcribed and processed into CRISPR RNA (crRNA). Functions as a ssRNA-specific endoribonuclease. Involved in the integration of spacer DNA into the CRISPR cassette. The sequence is that of CRISPR-associated endoribonuclease Cas2 from Parvibaculum lavamentivorans (strain DS-1 / DSM 13023 / NCIMB 13966).